Consider the following 200-residue polypeptide: Protein GrpE (200 aa).

Residues methionine 1 to asparagine 11 show a composition bias toward polar residues. Residues methionine 1–asparagine 25 are disordered.

Belongs to the GrpE family. As to quaternary structure, homodimer.

It localises to the cytoplasm. Functionally, participates actively in the response to hyperosmotic and heat shock by preventing the aggregation of stress-denatured proteins, in association with DnaK and GrpE. It is the nucleotide exchange factor for DnaK and may function as a thermosensor. Unfolded proteins bind initially to DnaJ; upon interaction with the DnaJ-bound protein, DnaK hydrolyzes its bound ATP, resulting in the formation of a stable complex. GrpE releases ADP from DnaK; ATP binding to DnaK triggers the release of the substrate protein, thus completing the reaction cycle. Several rounds of ATP-dependent interactions between DnaJ, DnaK and GrpE are required for fully efficient folding. The protein is Protein GrpE of Shewanella pealeana (strain ATCC 700345 / ANG-SQ1).